A 660-amino-acid chain; its full sequence is Sodium/nucleoside cotransporter 2 (660 aa).

Residue Ser-46 is modified to Phosphoserine. A run of 14 helical transmembrane segments spans residues 82–102 (ILLGLLCLAYAAYFLAACILN), 106–125 (ALALFVITCLVIFILACHFL), 150–168 (KRVFVGLSVVGLILWLALD), 174–194 (EQLISFAGICMFILILFACSK), 202–222 (RTVFWGLGLQFIFGILVIRTE), 235–255 (IQIFLAYTVEGSSFVFGDTLV), 262–282 (QSLPIIIFFGCVMSILYYLGL), 297–316 (TMGTTAAETLAVAGNIFVGM), 338–357 (VMTGGFATIAGTVLGAFISF), 364–383 (LISASVMAAPCALALSKLVY), 425–445 (VAANLIAFLAVLAFINATLSW), 456–476 (SFQVICSYVLRPMVFMMGVQW), 531–551 (TTFSLCGFANLSSIGITLGGL), and 569–589 (ALFTGACVSFISACMAGILYV).

This sequence belongs to the concentrative nucleoside transporter (CNT) (TC 2.A.41) family.

It is found in the membrane. The protein resides in the apicolateral cell membrane. The enzyme catalyses adenosine(out) + Na(+)(out) = adenosine(in) + Na(+)(in). It carries out the reaction inosine(out) + Na(+)(out) = inosine(in) + Na(+)(in). The catalysed reaction is guanosine(out) + Na(+)(out) = guanosine(in) + Na(+)(in). It catalyses the reaction uridine(out) + Na(+)(out) = uridine(in) + Na(+)(in). Its function is as follows. Sodium-dependent and purine-selective transporter. Exhibits the transport characteristics of the nucleoside transport system cif or N1 subtype (N1/cif) (selective for purine nucleosides and uridine). Plays a critical role in specific uptake and salvage of purine nucleosides in kidney and other tissues. May contribute to regulate the transport of organic compounds in testes across the blood-testis-barrier. In Mus musculus (Mouse), this protein is Sodium/nucleoside cotransporter 2 (Slc28a2).